Here is a 316-residue protein sequence, read N- to C-terminus: Ribosomal RNA small subunit methyltransferase H (316 aa).

Residues 35–37, Asp-55, Phe-79, Asp-101, and Gln-108 each bind S-adenosyl-L-methionine; that span reads GGH.

Belongs to the methyltransferase superfamily. RsmH family.

The protein localises to the cytoplasm. The enzyme catalyses cytidine(1402) in 16S rRNA + S-adenosyl-L-methionine = N(4)-methylcytidine(1402) in 16S rRNA + S-adenosyl-L-homocysteine + H(+). Its function is as follows. Specifically methylates the N4 position of cytidine in position 1402 (C1402) of 16S rRNA. The protein is Ribosomal RNA small subunit methyltransferase H of Vibrio proteolyticus (Aeromonas proteolytica).